Here is a 403-residue protein sequence, read N- to C-terminus: Acetylornithine aminotransferase (403 aa).

Residues 107–108 and phenylalanine 140 contribute to the pyridoxal 5'-phosphate site; that span reads GA. Arginine 143 contributes to the N(2)-acetyl-L-ornithine binding site. 225–228 contributes to the pyridoxal 5'-phosphate binding site; it reads DEVQ. Lysine 254 is subject to N6-(pyridoxal phosphate)lysine. Serine 282 serves as a coordination point for N(2)-acetyl-L-ornithine. Threonine 283 lines the pyridoxal 5'-phosphate pocket.

This sequence belongs to the class-III pyridoxal-phosphate-dependent aminotransferase family. ArgD subfamily. Homodimer. It depends on pyridoxal 5'-phosphate as a cofactor.

The protein localises to the cytoplasm. The enzyme catalyses N(2)-acetyl-L-ornithine + 2-oxoglutarate = N-acetyl-L-glutamate 5-semialdehyde + L-glutamate. Its pathway is amino-acid biosynthesis; L-arginine biosynthesis; N(2)-acetyl-L-ornithine from L-glutamate: step 4/4. The sequence is that of Acetylornithine aminotransferase from Vibrio parahaemolyticus serotype O3:K6 (strain RIMD 2210633).